We begin with the raw amino-acid sequence, 410 residues long: Mating-type locus allele B3 protein (410 aa).

A variable domain between B alleles region spans residues methionine 1 to cysteine 110. Residues glycine 107 to histidine 184 constitute a DNA-binding region (homeobox; TALE-type). The segment at arginine 111–valine 410 is highly conserved between B alleles. Disordered regions lie at residues alanine 203 to aspartate 224 and threonine 278 to leucine 335. Residues leucine 205–glutamate 219 are compositionally biased toward polar residues. The Nuclear localization signal motif lies at lysine 276–arginine 308. Residues alanine 291–serine 307 show a composition bias toward basic residues. The segment covering proline 312 to leucine 335 has biased composition (polar residues). The interval proline 333 to valine 410 is not essential for B3 function.

This sequence belongs to the TALE/M-ATYP homeobox family.

Its subcellular location is the nucleus. Functionally, the B locus has at least 25 alleles, and any combination of two different B alleles yields a multimeric regulatory protein, that activates genes responsible for the pathogenicity and for the sexual development of the fungus within the corn plant. This chain is Mating-type locus allele B3 protein, found in Mycosarcoma maydis (Corn smut fungus).